A 279-amino-acid chain; its full sequence is Tryptophan 2,3-dioxygenase (279 aa).

Substrate contacts are provided by residues Phe-48–His-52, Tyr-110, and Arg-114. Heme is bound at residue His-237. Thr-251 lines the substrate pocket.

Belongs to the tryptophan 2,3-dioxygenase family. As to quaternary structure, homotetramer. Heme is required as a cofactor.

It catalyses the reaction L-tryptophan + O2 = N-formyl-L-kynurenine. The protein operates within amino-acid degradation; L-tryptophan degradation via kynurenine pathway; L-kynurenine from L-tryptophan: step 1/2. Heme-dependent dioxygenase that catalyzes the oxidative cleavage of the L-tryptophan (L-Trp) pyrrole ring and converts L-tryptophan to N-formyl-L-kynurenine. Catalyzes the oxidative cleavage of the indole moiety. This Bacillus thuringiensis subsp. konkukian (strain 97-27) protein is Tryptophan 2,3-dioxygenase.